Reading from the N-terminus, the 287-residue chain is MRRVVMTQLKLLFAVFYCRFQQNKLTQAAGALTYSTMLAIVPLVMVVFAIFSAFPMFNEAAAELKTFIFDNFSPSAGDTVGQYIDEFVVNSKSMSAVGIISLIAVALLLINQIDRTINDIWNSKNRNFIFSMTIYWTLLTLGPIFIGMSFAINTYIRSIIAFEGDLGLPFGLKLLSFVPFLLTWLSFSLIYTLVPNTKVNFRYAAVGALVAAIFFTLGKKAFAWYMATFPSYQLIYGAMATLPITLLWIQLSWLFILLGAQLTAVLGDMRLIKSGDLNLTAIKEKTE.

Helical transmembrane passes span 37-57, 93-113, 128-148, 174-194, 204-224, and 238-258; these read MLAIVPLVMVVFAIFSAFPMF, SMSAVGIISLIAVALLLINQI, FIFSMTIYWTLLTLGPIFIGM, LLSFVPFLLTWLSFSLIYTLV, AAVGALVAAIFFTLGKKAFAW, and AMATLPITLLWIQLSWLFILL.

Belongs to the UPF0761 family.

The protein resides in the cell inner membrane. The sequence is that of UPF0761 membrane protein MS0032 from Mannheimia succiniciproducens (strain KCTC 0769BP / MBEL55E).